Consider the following 716-residue polypeptide: 1,4-alpha-glucan branching enzyme GlgB (716 aa).

Catalysis depends on Asp399, which acts as the Nucleophile. Residue Glu452 is the Proton donor of the active site.

The protein belongs to the glycosyl hydrolase 13 family. GlgB subfamily. In terms of assembly, monomer.

It catalyses the reaction Transfers a segment of a (1-&gt;4)-alpha-D-glucan chain to a primary hydroxy group in a similar glucan chain.. Its pathway is glycan biosynthesis; glycogen biosynthesis. Catalyzes the formation of the alpha-1,6-glucosidic linkages in glycogen by scission of a 1,4-alpha-linked oligosaccharide from growing alpha-1,4-glucan chains and the subsequent attachment of the oligosaccharide to the alpha-1,6 position. This is 1,4-alpha-glucan branching enzyme GlgB from Rhodopseudomonas palustris (strain BisB5).